Consider the following 161-residue polypeptide: Cysteine dioxygenase (161 aa).

Residues histidine 75, histidine 77, and histidine 125 each contribute to the Fe cation site.

The protein belongs to the cysteine dioxygenase family. It depends on Fe cation as a cofactor.

The enzyme catalyses L-cysteine + O2 = 3-sulfino-L-alanine + H(+). This chain is Cysteine dioxygenase (cdoA), found in Bacillus subtilis (strain 168).